A 295-amino-acid polypeptide reads, in one-letter code: Tissue factor (295 aa).

Positions 1-28 (MAIPMRPRLLAALAPTFLGFLLLQVAVG) are cleaved as a signal peptide. At 29–252 (AGTPPGKAFN…TEQWKSVLGE (224 aa)) the chain is on the extracellular side. N38 and N58 each carry an N-linked (GlcNAc...) asparagine glycan. A disulfide bond links C76 and C84. 4 N-linked (GlcNAc...) asparagine glycosylation sites follow: N95, N109, N170, and N201. Cysteines 219 and 242 form a disulfide. Positions 246–248 (WKS) match the WKS motif motif. A helical membrane pass occupies residues 253 to 275 (TLIIVGAVVFLVTVFIILLTISL). C276 is lipidated: S-palmitoyl cysteine. The Cytoplasmic portion of the chain corresponds to 276 to 295 (CKRRKNRAGQKRKNTPSRLA).

The protein belongs to the tissue factor family. In terms of assembly, interacts with HSPE; the interaction, inhibited by heparin, promotes the generation of activated factor X and activates coagulation in the presence of activated factor VII.

It is found in the membrane. Initiates blood coagulation by forming a complex with circulating factor VII or VIIa. The [TF:VIIa] complex activates factors IX or X by specific limited proteolysis. TF plays a role in normal hemostasis by initiating the cell-surface assembly and propagation of the coagulation protease cascade. The sequence is that of Tissue factor (F3) from Rattus norvegicus (Rat).